A 289-amino-acid chain; its full sequence is MSAKHPVIAVTGSSGAGTTTTSLAFRKIFAQLNLHAAEVEGDSFHRYTRPEMDMAIRKARDAGRHISYFGPEANDFGLLEQTFIEYGQSGKGKSRKYLHTYDEAVPWNQVPGTFTPWQPLPEPTDVLFYEGLHGGVVTPQHNVAQHVDLLVGVVPIVNLEWIQKLIRDTSERGHSREAVMDSVVRSMEDYINYITPQFSRTHLNFQRVPTVDTSNPFAAKGIPSLDESFVVIHFRNLEGIDFPWLLAMLQGSFISHINTLVVPGGKMGLAMELIMLPLVQRLMEGKKIE.

12-20 (GSSGAGTTT) serves as a coordination point for ATP.

Belongs to the phosphoribulokinase family.

The enzyme catalyses D-ribulose 5-phosphate + ATP = D-ribulose 1,5-bisphosphate + ADP + H(+). In Escherichia coli (strain K12), this protein is Probable phosphoribulokinase (prkB).